A 210-amino-acid polypeptide reads, in one-letter code: MLGIIGKKLGMTTLYDEAGRSVPCTVITGGPCVVTQIKNIEKDGYTAVQLGYDDKKEKNTVKPLMGHFQKAQTTPKRKLVEFKEFGKELGKEIQLGQTIQLHDIFVEGEYVDAIGLSKGKGFQGVVKRHGFSGVGGKSHGQHNRERAPGAIGACSTPSRVFKGMRMAGRTGGQRVKITNLRIMKLVPEKNILVISGSVPGAKNGYIILEK.

This sequence belongs to the universal ribosomal protein uL3 family. Part of the 50S ribosomal subunit. Forms a cluster with proteins L14 and L19.

Functionally, one of the primary rRNA binding proteins, it binds directly near the 3'-end of the 23S rRNA, where it nucleates assembly of the 50S subunit. The polypeptide is Large ribosomal subunit protein uL3 (Amoebophilus asiaticus (strain 5a2)).